Consider the following 338-residue polypeptide: Lumican (338 aa).

A signal peptide spans 1–18 (MNVCTFTLVLALVGSVSG). Residue Q19 is modified to Pyrrolidone carboxylic acid. A sulfotyrosine mark is found at Y20, Y21, Y23, and Y30. The 39-residue stretch at 28–66 (FMYGELSPNCAPECNCPHSYPTAMYCDDLKLKSVPMVPP) folds into the LRRNT domain. 8 LRR repeats span residues 67–88 (GIKY…AFEN), 91–114 (DLQW…VFSK), 117–137 (QLKK…PLPK), 138–159 (SLQD…DGLV), 160–181 (NLTF…ASLK), 185–205 (SLEY…GLPT), 206–227 (SLLT…YFNR), and 230–250 (GLQY…PGNS). Residue N88 is glycosylated (N-linked (GlcNAc...) (keratan sulfate) asparagine). The N-linked (GlcNAc...) (keratan sulfate) asparagine glycan is linked to N127. N160 is a glycosylation site (N-linked (GlcNAc...) (keratan sulfate) asparagine). Residue N252 is glycosylated (N-linked (GlcNAc...) (keratan sulfate) asparagine). 2 LRR repeats span residues 255-276 (SLLE…NENL) and 277-296 (ENYY…SFCK). A disulfide bond links C295 and C328. Phosphoserine is present on S304. The stretch at 305-326 (KIKHLRLDGNPLTQSSLPPDMY) is one LRR 11 repeat.

This sequence belongs to the small leucine-rich proteoglycan (SLRP) family. SLRP class II subfamily. In terms of assembly, binds to laminin. Post-translationally, contains keratan sulfate.

It localises to the secreted. It is found in the extracellular space. The protein localises to the extracellular matrix. The chain is Lumican (Lum) from Rattus norvegicus (Rat).